The primary structure comprises 336 residues: Holliday junction branch migration complex subunit RuvB (336 aa).

Residues 4–185 are large ATPase domain (RuvB-L); the sequence is MDERLLSGES…FGVLSRLEYY (182 aa). Residues leucine 24, arginine 25, glycine 66, lysine 69, threonine 70, threonine 71, 132-134, arginine 175, tyrosine 185, and arginine 222 contribute to the ATP site; that span reads EDF. Threonine 70 is a binding site for Mg(2+). The segment at 186 to 256 is small ATPAse domain (RuvB-S); sequence TVDQLSAIVE…ITQMALELLQ (71 aa). A head domain (RuvB-H) region spans residues 259–336; sequence KLGLDHIDHK…EHFGMEMPKV (78 aa). Residues arginine 314 and arginine 319 each coordinate DNA.

This sequence belongs to the RuvB family. As to quaternary structure, homohexamer. Forms an RuvA(8)-RuvB(12)-Holliday junction (HJ) complex. HJ DNA is sandwiched between 2 RuvA tetramers; dsDNA enters through RuvA and exits via RuvB. An RuvB hexamer assembles on each DNA strand where it exits the tetramer. Each RuvB hexamer is contacted by two RuvA subunits (via domain III) on 2 adjacent RuvB subunits; this complex drives branch migration. In the full resolvosome a probable DNA-RuvA(4)-RuvB(12)-RuvC(2) complex forms which resolves the HJ.

The protein localises to the cytoplasm. It catalyses the reaction ATP + H2O = ADP + phosphate + H(+). In terms of biological role, the RuvA-RuvB-RuvC complex processes Holliday junction (HJ) DNA during genetic recombination and DNA repair, while the RuvA-RuvB complex plays an important role in the rescue of blocked DNA replication forks via replication fork reversal (RFR). RuvA specifically binds to HJ cruciform DNA, conferring on it an open structure. The RuvB hexamer acts as an ATP-dependent pump, pulling dsDNA into and through the RuvAB complex. RuvB forms 2 homohexamers on either side of HJ DNA bound by 1 or 2 RuvA tetramers; 4 subunits per hexamer contact DNA at a time. Coordinated motions by a converter formed by DNA-disengaged RuvB subunits stimulates ATP hydrolysis and nucleotide exchange. Immobilization of the converter enables RuvB to convert the ATP-contained energy into a lever motion, pulling 2 nucleotides of DNA out of the RuvA tetramer per ATP hydrolyzed, thus driving DNA branch migration. The RuvB motors rotate together with the DNA substrate, which together with the progressing nucleotide cycle form the mechanistic basis for DNA recombination by continuous HJ branch migration. Branch migration allows RuvC to scan DNA until it finds its consensus sequence, where it cleaves and resolves cruciform DNA. In Bacillus cereus (strain ZK / E33L), this protein is Holliday junction branch migration complex subunit RuvB.